A 438-amino-acid chain; its full sequence is MVDYQGKKVVIIGLGLTGLSCVDFFIARGVTPRVMDTRINPPGLDQLPESVEQHVGDLNQEWLLDADLIVVSPGMALAHPALSEAAEAGVEIIGDIELFCRENQAPVVAITGSNGKSTVTTLVGEMAKAAGWSVGGGGNIGVPALTLLKQDNQLTVLELSSFQLETTHSLRASAATILNVTEDHTDRYPLGLQQYRAAKLRVYENAKVCVVNADDALTMPVRGADSRCISFGVDVGDYHLNKQQGEIWLRVRGEKVLNTREMKLSGRHNYTNALAALALADAVGIPRASSLKALTTFSGLPHRFQLVLERHGVRWINDSKATNVGSTEAALDGLQVDGTLHLLLGGDGKSADFSGLTHFLQGDRIKVYCFGRDGGQLAALRPDVSQLTETMAQAMALVAKVVLPGDRVLLSPACASLDQFRSFEHRGNEFARLAEELG.

112 to 118 (GSNGKST) lines the ATP pocket.

Belongs to the MurCDEF family.

Its subcellular location is the cytoplasm. It carries out the reaction UDP-N-acetyl-alpha-D-muramoyl-L-alanine + D-glutamate + ATP = UDP-N-acetyl-alpha-D-muramoyl-L-alanyl-D-glutamate + ADP + phosphate + H(+). Its pathway is cell wall biogenesis; peptidoglycan biosynthesis. In terms of biological role, cell wall formation. Catalyzes the addition of glutamate to the nucleotide precursor UDP-N-acetylmuramoyl-L-alanine (UMA). The sequence is that of UDP-N-acetylmuramoylalanine--D-glutamate ligase from Yersinia pestis bv. Antiqua (strain Antiqua).